The following is a 290-amino-acid chain: Inositol-1-monophosphatase (290 aa).

Mg(2+) contacts are provided by glutamate 83, aspartate 104, isoleucine 106, and aspartate 107. Residue glutamate 83 coordinates substrate. Substrate contacts are provided by residues 106–109 (IDGT), arginine 206, and aspartate 235. Residue aspartate 235 participates in Mg(2+) binding.

The protein belongs to the inositol monophosphatase superfamily. The cofactor is Mg(2+).

The enzyme catalyses a myo-inositol phosphate + H2O = myo-inositol + phosphate. This is Inositol-1-monophosphatase (suhB) from Mycobacterium bovis (strain ATCC BAA-935 / AF2122/97).